The following is a 393-amino-acid chain: Chorismate synthase (393 aa).

The NADP(+) site is built by Arg40 and Arg46. FMN is bound by residues 129–131 (RSS), 249–250 (QA), Gly301, 316–320 (KPIPT), and Arg342.

This sequence belongs to the chorismate synthase family. As to quaternary structure, homotetramer. FMNH2 is required as a cofactor.

The catalysed reaction is 5-O-(1-carboxyvinyl)-3-phosphoshikimate = chorismate + phosphate. Its pathway is metabolic intermediate biosynthesis; chorismate biosynthesis; chorismate from D-erythrose 4-phosphate and phosphoenolpyruvate: step 7/7. Functionally, catalyzes the anti-1,4-elimination of the C-3 phosphate and the C-6 proR hydrogen from 5-enolpyruvylshikimate-3-phosphate (EPSP) to yield chorismate, which is the branch point compound that serves as the starting substrate for the three terminal pathways of aromatic amino acid biosynthesis. This reaction introduces a second double bond into the aromatic ring system. The chain is Chorismate synthase from Geotalea uraniireducens (strain Rf4) (Geobacter uraniireducens).